Reading from the N-terminus, the 307-residue chain is Ornithine carbamoyltransferase (307 aa).

Residues 53 to 56 (STRT), glutamine 80, arginine 104, and 131 to 134 (HPCQ) contribute to the carbamoyl phosphate site. Residues asparagine 162, aspartate 220, and 224–225 (SM) each bind L-ornithine. Residues 260–261 (CL) and arginine 288 contribute to the carbamoyl phosphate site.

This sequence belongs to the aspartate/ornithine carbamoyltransferase superfamily. OTCase family.

The protein localises to the cytoplasm. The enzyme catalyses carbamoyl phosphate + L-ornithine = L-citrulline + phosphate + H(+). It functions in the pathway amino-acid biosynthesis; L-arginine biosynthesis; L-arginine from L-ornithine and carbamoyl phosphate: step 1/3. Functionally, reversibly catalyzes the transfer of the carbamoyl group from carbamoyl phosphate (CP) to the N(epsilon) atom of ornithine (ORN) to produce L-citrulline. In Nitrosomonas eutropha (strain DSM 101675 / C91 / Nm57), this protein is Ornithine carbamoyltransferase.